A 271-amino-acid chain; its full sequence is DNA repair protein RecO (271 aa).

Residues 248-271 (AVGVEDSVRQDGDRDSTTRTPSSA) form a disordered region. Residues 253 to 264 (DSVRQDGDRDST) are compositionally biased toward basic and acidic residues.

This sequence belongs to the RecO family.

Its function is as follows. Involved in DNA repair and RecF pathway recombination. The polypeptide is DNA repair protein RecO (Rhodococcus opacus (strain B4)).